The sequence spans 429 residues: Mannose-6-phosphate isomerase (429 aa).

Positions 109, 111, 136, and 281 each coordinate Zn(2+). Residue Arg-300 is part of the active site.

The protein belongs to the mannose-6-phosphate isomerase type 1 family. Requires Zn(2+) as cofactor.

Its subcellular location is the cytoplasm. It carries out the reaction D-mannose 6-phosphate = D-fructose 6-phosphate. It functions in the pathway nucleotide-sugar biosynthesis; GDP-alpha-D-mannose biosynthesis; alpha-D-mannose 1-phosphate from D-fructose 6-phosphate: step 1/2. Functionally, involved in the synthesis of the GDP-mannose and dolichol-phosphate-mannose required for a number of critical mannosyl transfer reactions. This Eremothecium gossypii (strain ATCC 10895 / CBS 109.51 / FGSC 9923 / NRRL Y-1056) (Yeast) protein is Mannose-6-phosphate isomerase (PMI1).